A 463-amino-acid polypeptide reads, in one-letter code: L-seryl-tRNA(Sec) selenium transferase (463 aa).

An N6-(pyridoxal phosphate)lysine modification is found at lysine 295.

The protein belongs to the SelA family. In terms of assembly, homodecamer; pentamer of dimers. Binds only one seryl-tRNA(Sec) per dimer. Pyridoxal 5'-phosphate is required as a cofactor.

The protein localises to the cytoplasm. It carries out the reaction L-seryl-tRNA(Sec) + selenophosphate + H(+) = L-selenocysteinyl-tRNA(Sec) + phosphate. It functions in the pathway aminoacyl-tRNA biosynthesis; selenocysteinyl-tRNA(Sec) biosynthesis; selenocysteinyl-tRNA(Sec) from L-seryl-tRNA(Sec) (bacterial route): step 1/1. Functionally, converts seryl-tRNA(Sec) to selenocysteinyl-tRNA(Sec) required for selenoprotein biosynthesis. The chain is L-seryl-tRNA(Sec) selenium transferase from Escherichia fergusonii (strain ATCC 35469 / DSM 13698 / CCUG 18766 / IAM 14443 / JCM 21226 / LMG 7866 / NBRC 102419 / NCTC 12128 / CDC 0568-73).